A 497-amino-acid chain; its full sequence is Protein root UVB sensitive 6 (497 aa).

It belongs to the RUS1 family.

Required for normal embryo development. The polypeptide is Protein root UVB sensitive 6 (Arabidopsis thaliana (Mouse-ear cress)).